Here is a 145-residue protein sequence, read N- to C-terminus: MISMLFPRSPLCTAAIVFYTCVCIPLGRLKKNGGDADAHDDDGYNLVGVMFGDKEKEEEICCPICLVEFEAEDAVTHLPRCAHLFHINCIEPWLLRGHLTCPLCRSFVLAPTPPTQNVNNAHSSSTLYLSIFFFFCIFLHLLGYL.

Positions 1 to 29 (MISMLFPRSPLCTAAIVFYTCVCIPLGRL) are cleaved as a signal peptide. Residues 62–105 (CPICLVEFEAEDAVTHLPRCAHLFHINCIEPWLLRGHLTCPLCR) form an RING-type; atypical zinc finger. A helical transmembrane segment spans residues 125 to 145 (STLYLSIFFFFCIFLHLLGYL).

This sequence belongs to the RING-type zinc finger family. ATL subfamily.

It is found in the membrane. It catalyses the reaction S-ubiquitinyl-[E2 ubiquitin-conjugating enzyme]-L-cysteine + [acceptor protein]-L-lysine = [E2 ubiquitin-conjugating enzyme]-L-cysteine + N(6)-ubiquitinyl-[acceptor protein]-L-lysine.. Its pathway is protein modification; protein ubiquitination. The sequence is that of RING-H2 finger protein ATL18 (ATL18) from Arabidopsis thaliana (Mouse-ear cress).